Reading from the N-terminus, the 240-residue chain is Cell division protein FtsQ (240 aa).

Residues 1-7 lie on the Cytoplasmic side of the membrane; the sequence is MTGPGLR. Residues 8-28 traverse the membrane as a helical segment; sequence LLAGMGLAGALVLGLSLWLHF. The Periplasmic segment spans residues 29 to 240; sequence DPDQHLPIGS…EADNDGGNAR (212 aa). The POTRA domain occupies 34–102; sequence LPIGSIQITG…DTLEVHVTEP (69 aa).

It belongs to the FtsQ/DivIB family. FtsQ subfamily. As to quaternary structure, part of a complex composed of FtsB, FtsL and FtsQ.

The protein resides in the cell inner membrane. In terms of biological role, essential cell division protein. May link together the upstream cell division proteins, which are predominantly cytoplasmic, with the downstream cell division proteins, which are predominantly periplasmic. May control correct divisome assembly. The chain is Cell division protein FtsQ from Thioalkalivibrio sp. (strain K90mix).